The chain runs to 781 residues: Matrix non-peptidase homolog 1 (781 aa).

An N-terminal signal peptide occupies residues 1–27; the sequence is MTPPPASPSKKAKSSWLLIALIAVIIG. Residue N54 is glycosylated (N-linked (GlcNAc...) asparagine). The segment covering 63 to 94 has biased composition (low complexity); that stretch reads TSKATVSTTTTQSATTPSTTTTRIEETTTTTS. Positions 63–113 are disordered; sequence TSKATVSTTTTQSATTPSTTTTRIEETTTTTSGAFDESVKNSEASTSTIPT. N-linked (GlcNAc...) asparagine glycans are attached at residues N183, N341, N375, and N520.

The sequence is that of Matrix non-peptidase homolog 1 (mnp-1) from Caenorhabditis elegans.